The sequence spans 297 residues: 1D-myo-inositol 2-acetamido-2-deoxy-alpha-D-glucopyranoside deacetylase (297 aa).

Positions 14, 17, and 149 each coordinate Zn(2+).

Belongs to the MshB deacetylase family. Zn(2+) is required as a cofactor.

The enzyme catalyses 1D-myo-inositol 2-acetamido-2-deoxy-alpha-D-glucopyranoside + H2O = 1D-myo-inositol 2-amino-2-deoxy-alpha-D-glucopyranoside + acetate. Its function is as follows. Catalyzes the deacetylation of 1D-myo-inositol 2-acetamido-2-deoxy-alpha-D-glucopyranoside (GlcNAc-Ins) in the mycothiol biosynthesis pathway. The sequence is that of 1D-myo-inositol 2-acetamido-2-deoxy-alpha-D-glucopyranoside deacetylase from Thermomonospora curvata (strain ATCC 19995 / DSM 43183 / JCM 3096 / KCTC 9072 / NBRC 15933 / NCIMB 10081 / Henssen B9).